The primary structure comprises 166 residues: Ribonuclease P protein component (166 aa).

It belongs to the RnpA family. In terms of assembly, consists of a catalytic RNA component (M1 or rnpB) and a protein subunit.

It catalyses the reaction Endonucleolytic cleavage of RNA, removing 5'-extranucleotides from tRNA precursor.. Its function is as follows. RNaseP catalyzes the removal of the 5'-leader sequence from pre-tRNA to produce the mature 5'-terminus. It can also cleave other RNA substrates such as 4.5S RNA. The protein component plays an auxiliary but essential role in vivo by binding to the 5'-leader sequence and broadening the substrate specificity of the ribozyme. This Helicobacter pylori (strain HPAG1) protein is Ribonuclease P protein component.